The following is a 97-amino-acid chain: Aspartyl/glutamyl-tRNA(Asn/Gln) amidotransferase subunit C (97 aa).

This sequence belongs to the GatC family. In terms of assembly, heterotrimer of A, B and C subunits.

It carries out the reaction L-glutamyl-tRNA(Gln) + L-glutamine + ATP + H2O = L-glutaminyl-tRNA(Gln) + L-glutamate + ADP + phosphate + H(+). The catalysed reaction is L-aspartyl-tRNA(Asn) + L-glutamine + ATP + H2O = L-asparaginyl-tRNA(Asn) + L-glutamate + ADP + phosphate + 2 H(+). Allows the formation of correctly charged Asn-tRNA(Asn) or Gln-tRNA(Gln) through the transamidation of misacylated Asp-tRNA(Asn) or Glu-tRNA(Gln) in organisms which lack either or both of asparaginyl-tRNA or glutaminyl-tRNA synthetases. The reaction takes place in the presence of glutamine and ATP through an activated phospho-Asp-tRNA(Asn) or phospho-Glu-tRNA(Gln). The protein is Aspartyl/glutamyl-tRNA(Asn/Gln) amidotransferase subunit C of Listeria monocytogenes serotype 4b (strain CLIP80459).